Here is a 167-residue protein sequence, read N- to C-terminus: SsrA-binding protein (167 aa).

This sequence belongs to the SmpB family.

It is found in the cytoplasm. In terms of biological role, required for rescue of stalled ribosomes mediated by trans-translation. Binds to transfer-messenger RNA (tmRNA), required for stable association of tmRNA with ribosomes. tmRNA and SmpB together mimic tRNA shape, replacing the anticodon stem-loop with SmpB. tmRNA is encoded by the ssrA gene; the 2 termini fold to resemble tRNA(Ala) and it encodes a 'tag peptide', a short internal open reading frame. During trans-translation Ala-aminoacylated tmRNA acts like a tRNA, entering the A-site of stalled ribosomes, displacing the stalled mRNA. The ribosome then switches to translate the ORF on the tmRNA; the nascent peptide is terminated with the 'tag peptide' encoded by the tmRNA and targeted for degradation. The ribosome is freed to recommence translation, which seems to be the essential function of trans-translation. The chain is SsrA-binding protein from Stenotrophomonas maltophilia (strain R551-3).